Here is a 761-residue protein sequence, read N- to C-terminus: Translational repressor ifet-1 (761 aa).

Disordered regions lie at residues 101–274 (SPQR…SSGG), 386–446 (KGME…QHLH), 557–592 (VQRQ…AHNQ), 681–702 (QQAQ…QQHQ), and 730–761 (GSQF…AVPK). Basic and acidic residues-rich tracts occupy residues 114 to 128 (PTDD…ERLG), 164 to 189 (RGTR…EERL), and 212 to 222 (IELRGFDEPKK). Composition is skewed to polar residues over residues 400–410 (QDPSQQAQLLQ), 557–568 (VQRQLQKSSSNA), 576–592 (SQSP…AHNQ), and 690–702 (ERQG…QQHQ).

In terms of assembly, interacts with cgh-1. Interacts with ife-1 and oma-1. In the embryo, significantly enriched in the germ cell lineage.

The protein resides in the cytoplasm. Its function is as follows. Involved in translational repression of multiple mRNAs in the distal gonad. Recruited to the 3' untranslated region (UTR) of zif-1 by oma-1 and is required for translational repression of zif-1. May also be involved in translational repression of mei-1 through recruitment to the mei-1 3' UTR by oma-1. Required for oogenesis but not spermatogenesis, for P granule formation and for the localization of car-1 and cgh-1 to P granules. Required for normal spindle orientation in early embryos. The sequence is that of Translational repressor ifet-1 from Caenorhabditis elegans.